A 576-amino-acid chain; its full sequence is Arginine--tRNA ligase (576 aa).

A 'HIGH' region motif is present at residues 126–136 (ANPTGPMHIGH).

It belongs to the class-I aminoacyl-tRNA synthetase family. As to quaternary structure, monomer.

It localises to the cytoplasm. The enzyme catalyses tRNA(Arg) + L-arginine + ATP = L-arginyl-tRNA(Arg) + AMP + diphosphate. This is Arginine--tRNA ligase (argS) from Rickettsia prowazekii (strain Madrid E).